The sequence spans 743 residues: Serine-rich coiled-coil domain-containing protein 1 (743 aa).

Disordered stretches follow at residues 1 to 125 (MGDS…SRNK) and 156 to 175 (KSEGDDSGFTEEQTRRSVKQ). Over residues 29 to 56 (LPSSPSSSNTVGVHSSSPSSTNSSSGST) the composition is skewed to low complexity. Over residues 81–102 (EPTNQNLSISNGAQPGQSSMQK) the composition is skewed to polar residues. The stretch at 672–713 (MKDECSMLKLQLKEKDELISQLQEELEKVQHLQKAFASRVDK) forms a coiled coil.

Belongs to the CCSER family.

The sequence is that of Serine-rich coiled-coil domain-containing protein 1 (CCSER1) from Bos taurus (Bovine).